Here is a 138-residue protein sequence, read N- to C-terminus: ATP synthase epsilon chain (138 aa).

The protein belongs to the ATPase epsilon chain family. As to quaternary structure, F-type ATPases have 2 components, CF(1) - the catalytic core - and CF(0) - the membrane proton channel. CF(1) has five subunits: alpha(3), beta(3), gamma(1), delta(1), epsilon(1). CF(0) has three main subunits: a, b and c.

Its subcellular location is the cell inner membrane. Produces ATP from ADP in the presence of a proton gradient across the membrane. This is ATP synthase epsilon chain from Psychrobacter cryohalolentis (strain ATCC BAA-1226 / DSM 17306 / VKM B-2378 / K5).